We begin with the raw amino-acid sequence, 607 residues long: UvrABC system protein C (607 aa).

The 78-residue stretch at 29–106 (DKPGVYLMKD…IKKHNPKYNI (78 aa)) folds into the GIY-YIG domain. In terms of domain architecture, UVR spans 211–246 (GAILKALEKKMKEASENLEFERAKEYRDLMEDLKKV).

This sequence belongs to the UvrC family. As to quaternary structure, interacts with UvrB in an incision complex.

It is found in the cytoplasm. Its function is as follows. The UvrABC repair system catalyzes the recognition and processing of DNA lesions. UvrC both incises the 5' and 3' sides of the lesion. The N-terminal half is responsible for the 3' incision and the C-terminal half is responsible for the 5' incision. The polypeptide is UvrABC system protein C (Desulfitobacterium hafniense (strain Y51)).